We begin with the raw amino-acid sequence, 931 residues long: Chitin synthase 7 (931 aa).

Disordered stretches follow at residues 1 to 34 (MVRH…GHYR) and 56 to 92 (GDVG…ASSS). 2 stretches are compositionally biased toward polar residues: residues 7–28 (FTNS…TPYP) and 83–92 (PLTTGPASSS). N-linked (GlcNAc...) asparagine glycosylation is present at Asn536. A run of 3 helical transmembrane segments spans residues 573–593 (IFSL…FSII), 615–635 (INLV…VLAL), and 647–667 (ILTL…SIIL). N-linked (GlcNAc...) asparagine glycosylation occurs at Asn691. 2 consecutive transmembrane segments (helical) span residues 695-715 (GVLV…SFLY) and 725-745 (FPQY…YAFC). Positions 763-789 (LPAISSSKQKDGETAVVEEQQRSQGEL) are disordered. Residue Asn819 is glycosylated (N-linked (GlcNAc...) asparagine). A helical transmembrane segment spans residues 826–846 (LVVVWLLTNAALAISIQTLNG). N-linked (GlcNAc...) asparagine glycosylation is found at Asn866 and Asn874. Residues 899–919 (AILWTTFALSMVRFIGCVFYW) traverse the membrane as a helical segment.

This sequence belongs to the chitin synthase family. Class III subfamily.

It localises to the cell membrane. It catalyses the reaction [(1-&gt;4)-N-acetyl-beta-D-glucosaminyl](n) + UDP-N-acetyl-alpha-D-glucosamine = [(1-&gt;4)-N-acetyl-beta-D-glucosaminyl](n+1) + UDP + H(+). Polymerizes chitin, a structural polymer of the cell wall and septum, by transferring the sugar moiety of UDP-GlcNAc to the non-reducing end of the growing chitin polymer. The protein is Chitin synthase 7 of Cryptococcus neoformans var. grubii serotype A (strain H99 / ATCC 208821 / CBS 10515 / FGSC 9487) (Filobasidiella neoformans var. grubii).